Here is a 1228-residue protein sequence, read N- to C-terminus: DNA repair protein rad5 (1228 aa).

Disordered regions lie at residues 1-96 (MDRH…GTLT), 194-242 (PPVR…VLPS), 280-302 (QPPTVARKGQTKPGTPQSIPRVS), and 445-474 (KAMDKAKAGDHNTNGLASPPEEAEEGQELE). A compositionally biased stretch (low complexity) spans 34-43 (PSSSPQFSAP). The segment covering 70–83 (HNDDDDDDDDDDDE) has biased composition (acidic residues). Polar residues predominate over residues 211–237 (PKKSSTSQARSRSHAQAQPQPQSNTPT). A compositionally biased stretch (basic and acidic residues) spans 445-454 (KAMDKAKAGD). Acidic residues predominate over residues 465-474 (EEAEEGQELE). Positions 574 to 784 (PKQEQHCLGG…FSLVRFLRVE (211 aa)) constitute a Helicase ATP-binding domain. 587 to 594 (DEMGLGKT) is a binding site for ATP. A DEAH box motif is present at residues 735–738 (DEAH). The RING-type zinc finger occupies 967–1012 (CPICAEEPMIDQAVTGCWHSACKKCLLDYIKHQTDRNEVPRCFQCR). The region spanning 1060–1216 (ALISHLRTLR…MMSDEEKKMQ (157 aa)) is the Helicase C-terminal domain.

This sequence belongs to the SNF2/RAD54 helicase family.

The protein resides in the cytoplasm. It is found in the nucleus. In terms of biological role, probable helicase, member of the UBC2/RAD6 epistasis group. Functions with DNA repair protein uvs-2/rad18 in error-free postreplication DNA repair. Involved in the maintenance of wild-type rates of instability of simple repetitive sequences such as poly(GT) repeats. Seems to be involved in maintaining a balance which acts in favor of error-prone non-homologous joining during DNA double-strand breaks repairs. This is DNA repair protein rad5 (mus-41) from Neurospora crassa (strain ATCC 24698 / 74-OR23-1A / CBS 708.71 / DSM 1257 / FGSC 987).